A 165-amino-acid polypeptide reads, in one-letter code: Adenosine 5'-monophosphoramidase HINT3 (165 aa).

Residues 1–23 are disordered; it reads MAEKQAGLVGEPDPEGSSPGTSE. Ala-2 is subject to N-acetylalanine. The region spanning 32-143 is the HIT domain; sequence VFCRVAAGQE…PVKEFGFLSK (112 aa). AMP contacts are provided by residues 59-60 and 128-130; these read DI and HLH. The Histidine triad motif signature appears at 126–130; that stretch reads HLHLH. His-128 (tele-AMP-histidine intermediate) is an active-site residue.

The protein belongs to the HINT family. Forms dimers to octamers and even larger oligomer. Interacts with CALM1.

It is found in the cytoplasm. The protein resides in the nucleus. The catalysed reaction is adenosine 5'-phosphoramidate + H2O = AMP + NH4(+). Functionally, exhibits adenosine 5'-monophosphoramidase activity, hydrolyzing purine nucleotide phosphoramidates with a single phosphate group such as adenosine 5'monophosphoramidate (AMP-NH2) to yield AMP and NH2. Hydrolyzes lysyl-AMP (AMP-N-epsilon-(N-alpha-acetyl lysine methyl ester)) generated by lysine tRNA ligase. In Mus musculus (Mouse), this protein is Adenosine 5'-monophosphoramidase HINT3 (Hint3).